The sequence spans 166 residues: MDKGSTKVKLLSLENEIIEVDEEVAKKSQLIKNMIEDTGTEDDIPIPNVKKEILLKILEYCEKHKNDNPPEIEKPLTTSNLSELVDPYDAKFIDIENLEQLFEIILAANYLDIKSLLDLACAKVATLIKNKTPDEIRKTFNIPNDFTPEEEAQIREENKWAEEATS.

An interaction with the F-box domain of F-box proteins region spans residues 105–166 (ILAANYLDIK…ENKWAEEATS (62 aa)).

It belongs to the SKP1 family. As to quaternary structure, component of multiple SCF (SKP1-CUL1-F-box) E3 ubiquitin-protein ligase complexes formed of CUL1, SKP1, RBX1 and a variable F-box domain-containing protein as substrate-specific subunit.

Its pathway is protein modification; protein ubiquitination. In terms of biological role, essential component of the SCF (SKP1-CUL1-F-box protein) ubiquitin ligase complex, which mediates the ubiquitination of proteins involved in cell cycle progression, signal transduction and transcription. In the SCF complex, serves as an adapter that links the F-box protein to CUL1. The functional specificity of the SCF complex depends on the F-box protein as substrate recognition component. Its association with the holoenzyme telomerase ribonucleoprotein complex suggests that it may play a role in turnover of holoenzyme telomerase complex components. This is S-phase kinase-associated protein 1 homolog from Tetrahymena thermophila (strain SB210).